The following is a 117-amino-acid chain: Large ribosomal subunit protein uL18 (117 aa).

This sequence belongs to the universal ribosomal protein uL18 family. Part of the 50S ribosomal subunit; part of the 5S rRNA/L5/L18/L25 subcomplex. Contacts the 5S and 23S rRNAs.

In terms of biological role, this is one of the proteins that bind and probably mediate the attachment of the 5S RNA into the large ribosomal subunit, where it forms part of the central protuberance. The chain is Large ribosomal subunit protein uL18 from Pectobacterium carotovorum subsp. carotovorum (strain PC1).